Reading from the N-terminus, the 430-residue chain is Long-chain specific acyl-CoA dehydrogenase, mitochondrial (430 aa).

A mitochondrion-targeting transit peptide spans 1–30; sequence MAARLLLRSLRVLSARSATLPPPSARCSHS. Residue K42 is modified to N6-acetyllysine. 2 positions are modified to phosphoserine: S54 and S55. An N6-acetyllysine; alternate mark is found at K66 and K81. 2 positions are modified to N6-succinyllysine; alternate: K66 and K81. 2 positions are modified to N6-acetyllysine: K92 and K95. Residue K165 is modified to N6-succinyllysine. 170–179 lines the FAD pocket; the sequence is IAMTEPGAGS. Position 179 (S179) interacts with substrate. Phosphoserine is present on S191. 203–205 contacts FAD; the sequence is FIT. Residue 227 to 228 coordinates substrate; the sequence is AH. The residue at position 240 (K240) is an N6-succinyllysine. N6-acetyllysine; alternate occurs at positions 254 and 279. Residues K254 and K279 each carry the N6-succinyllysine; alternate modification. Substrate contacts are provided by residues Y282 and 289–292; that span reads PQER. The Proton acceptor role is filled by E291. Position 317 (R317) interacts with FAD. K318 carries the N6-acetyllysine modification. K322 is subject to N6-acetyllysine; alternate. K322 bears the N6-succinyllysine; alternate mark. Residue Q328 participates in FAD binding. K358 carries the N6-acetyllysine modification. S362 is modified (phosphoserine). 385–389 is an FAD binding site; that stretch reads QLHGG. 412-413 serves as a coordination point for substrate; it reads GG. 414–416 provides a ligand contact to FAD; that stretch reads TNE.

The protein belongs to the acyl-CoA dehydrogenase family. Homotetramer. Requires FAD as cofactor. Post-translationally, acetylation at Lys-318 and Lys-322 in proximity of the cofactor-binding sites strongly reduces catalytic activity. These sites are deacetylated by SIRT3.

It localises to the mitochondrion matrix. It catalyses the reaction a long-chain 2,3-saturated fatty acyl-CoA + oxidized [electron-transfer flavoprotein] + H(+) = a long-chain (2E)-enoyl-CoA + reduced [electron-transfer flavoprotein]. The enzyme catalyses octanoyl-CoA + oxidized [electron-transfer flavoprotein] + H(+) = (2E)-octenoyl-CoA + reduced [electron-transfer flavoprotein]. The catalysed reaction is decanoyl-CoA + oxidized [electron-transfer flavoprotein] + H(+) = (2E)-decenoyl-CoA + reduced [electron-transfer flavoprotein]. It carries out the reaction dodecanoyl-CoA + oxidized [electron-transfer flavoprotein] + H(+) = (2E)-dodecenoyl-CoA + reduced [electron-transfer flavoprotein]. It catalyses the reaction tetradecanoyl-CoA + oxidized [electron-transfer flavoprotein] + H(+) = (2E)-tetradecenoyl-CoA + reduced [electron-transfer flavoprotein]. The enzyme catalyses oxidized [electron-transfer flavoprotein] + hexadecanoyl-CoA + H(+) = (2E)-hexadecenoyl-CoA + reduced [electron-transfer flavoprotein]. The catalysed reaction is octadecanoyl-CoA + oxidized [electron-transfer flavoprotein] + H(+) = (2E)-octadecenoyl-CoA + reduced [electron-transfer flavoprotein]. It carries out the reaction (5E)-tetradecenoyl-CoA + oxidized [electron-transfer flavoprotein] + H(+) = (2E,5E)-tetradecadienoyl-CoA + reduced [electron-transfer flavoprotein]. It catalyses the reaction (5Z)-tetradecenoyl-CoA + oxidized [electron-transfer flavoprotein] + H(+) = (2E,5Z)-tetradecadienoyl-CoA + reduced [electron-transfer flavoprotein]. The enzyme catalyses oxidized [electron-transfer flavoprotein] + (9Z)-octadecenoyl-CoA + H(+) = (2E,9Z)-octadecadienoyl-CoA + reduced [electron-transfer flavoprotein]. The catalysed reaction is hexanoyl-CoA + oxidized [electron-transfer flavoprotein] + H(+) = (2E)-hexenoyl-CoA + reduced [electron-transfer flavoprotein]. It carries out the reaction eicosanoyl-CoA + oxidized [electron-transfer flavoprotein] + H(+) = (2E)-eicosenoyl-CoA + reduced [electron-transfer flavoprotein]. It catalyses the reaction docosanoyl-CoA + oxidized [electron-transfer flavoprotein] + H(+) = (2E)-docosenoyl-CoA + reduced [electron-transfer flavoprotein]. The enzyme catalyses tetracosanoyl-CoA + oxidized [electron-transfer flavoprotein] + H(+) = (2E)-tetracosenoyl-CoA + reduced [electron-transfer flavoprotein]. The protein operates within lipid metabolism; mitochondrial fatty acid beta-oxidation. Its activity is regulated as follows. Inhibited by crotonyl-CoA, 2-octenoyl-CoA and 2-hexadecenoyl-CoA. Long-chain specific acyl-CoA dehydrogenase is one of the acyl-CoA dehydrogenases that catalyze the first step of mitochondrial fatty acid beta-oxidation, an aerobic process breaking down fatty acids into acetyl-CoA and allowing the production of energy from fats. The first step of fatty acid beta-oxidation consists in the removal of one hydrogen from C-2 and C-3 of the straight-chain fatty acyl-CoA thioester, resulting in the formation of trans-2-enoyl-CoA. Among the different mitochondrial acyl-CoA dehydrogenases, long-chain specific acyl-CoA dehydrogenase can act on saturated and unsaturated acyl-CoAs with 6 to 24 carbons with a preference for 8 to 18 carbons long primary chains. The chain is Long-chain specific acyl-CoA dehydrogenase, mitochondrial from Rattus norvegicus (Rat).